The following is a 284-amino-acid chain: Bifunctional protein FolD (284 aa).

Residues 164 to 166 and Ser189 each bind NADP(+); that span reads GRS.

The protein belongs to the tetrahydrofolate dehydrogenase/cyclohydrolase family. As to quaternary structure, homodimer.

The catalysed reaction is (6R)-5,10-methylene-5,6,7,8-tetrahydrofolate + NADP(+) = (6R)-5,10-methenyltetrahydrofolate + NADPH. It carries out the reaction (6R)-5,10-methenyltetrahydrofolate + H2O = (6R)-10-formyltetrahydrofolate + H(+). It participates in one-carbon metabolism; tetrahydrofolate interconversion. Functionally, catalyzes the oxidation of 5,10-methylenetetrahydrofolate to 5,10-methenyltetrahydrofolate and then the hydrolysis of 5,10-methenyltetrahydrofolate to 10-formyltetrahydrofolate. This Listeria innocua serovar 6a (strain ATCC BAA-680 / CLIP 11262) protein is Bifunctional protein FolD.